A 553-amino-acid chain; its full sequence is Glucose-6-phosphate isomerase (553 aa).

D-glucose 6-phosphate is bound by residues 164–165 (GS), 215–220 (SKTFTT), Gln-359, Glu-363, His-394, and Lys-516. Glu-363 functions as the Proton donor in the catalytic mechanism. Residues His-394 and Lys-516 contribute to the active site.

It belongs to the GPI family. In terms of assembly, homodimer.

The protein localises to the cytoplasm. It localises to the cytosol. The enzyme catalyses alpha-D-glucose 6-phosphate = beta-D-fructose 6-phosphate. It participates in carbohydrate degradation; glycolysis; D-glyceraldehyde 3-phosphate and glycerone phosphate from D-glucose: step 2/4. In terms of biological role, in the cytoplasm, catalyzes the conversion of glucose-6-phosphate to fructose-6-phosphate, the second step in glycolysis, and the reverse reaction during gluconeogenesis. The protein is Glucose-6-phosphate isomerase (pgiA) of Aspergillus oryzae (strain ATCC 42149 / RIB 40) (Yellow koji mold).